A 2150-amino-acid polypeptide reads, in one-letter code: MELKTFKDLNDDIIGDTSPVINTGDQPNPLRTQQQQLQQQQQQQQQQQQQQQQQQQQQQQQQQQQQHHIPQQLYQKQQQQQHSHSYGNHSFIHNVSPTSPSYDINNNNNNNNNNNNNNNNNNNNNNNSNNNNNNNNNNKNNYNNNYYYSPIENSNISKSLEESVLNQFPHNFNLNSSNNNYLNNSSSLHNINQSVNSLSNNNNNQTNQQPINNNNNNNNNNNNNNSNNSNNSNNNNNGNNNNNITDSPTKSKRHSTYETNIGSHQRRKSIQSLIANSAIHSFSKLKNKPLSSSTPSTVNTCGAVNNNSNNNNNNNNNSTGSLGAIPMDRSFDGNINTITEESTGGNNSPRSNCGSNCGSNGGIPLSPRNLSSLNSGVNVSPRNIHLNNLNNNSSNLPPLSPRHINFHINVSNLNNNNNNNINPNNNPNNSNNSNNNVSPRNNNHNISPRGSNISPRSNNGGSTTISPRNISNNNNIINNINNNNILTPPRNSPRLENVNPTNSPRLLATSLNSTLPIVSSLTSSNNNNQSNNNTNPSINNNNGRNGHCIQTISEEILGNKPVVYNNGNNNNNNNTNNSTTSNNNITTNNNNNNNNNINNNVLSTPRKRTKGNHSKTNSLQDFETSSMNGGDDSISGAGSGGSLRRRNKDDNDENDGNSNNTNSNNSNNNNNNNNNSSNNNNNNSNNNNNNNNNNNNNNNNNNNNNNNNNNNNNNNNNNNNNNNNNNNYHNGATMMMSHNHQSIGMSSSPKKNNFKPFSRNCSLMGMGRRAWAIILGLFIVGSSISILATLVLRYSEENSIADDFARVARDRFTMLRIEFNNRLYITQTLSLLLSVFPSTSEDQFVPFSKLWSDNAEGLEGIMWAPRVSNLDRYTWEIEHSVKIREIVTNPNNSSDMRDVPAAAASDYYPILFSEPQSSNDHFKGYNIYSDMWRRPSLNKTRDTGEKVSVASPYINKLANVPKNSRSNVLLYIYQAVYTYGKVLSTVEDRRHEVIGFASCRFFISRMVSASLQRLTEEDSLDLYVFDLDSTPIGELIYYRASNAGNDDGSSPTNIMNGKMLEDRSDMIYYNTMNVGGRNWMIALRPSRKFTNKHYTFYPYAIGGVCMLLSALVSFWFAVNTKHNIKLSATNEDLHKEIYNRKLAEKALAESQERLELAMEGSEDAVWDWKVNTGELHISSRWFQILKAHDTSYQSRTLYEELKSSSTNNLNFKGDSKNGGSNNGTFNLFKNGKVDSSSPQSITNVNTTNGGGGGELRKSNSGYLYNDELFSPIILEEMVSSPNTHQLAIWNMKFLAELIHPDDKQKFISEIKKTITRETSIMEIECRMRKKYGGYLYIIMRGKVVSNETSFKDNSLRMAGTLRDMTSRKDMQRLILEKEAAEEANKAKSAFVATVSHEVRTPLSGVIGVSDLLLETNLSEEQRDYVQTIQKSSQALLTIINDILDYSKLESRQLKMETLPFSIIETCQAVIHMLSVAANDDVDILLRVPPNVPRIIFGDAMRMRQVLLNLLSNAIKFTSRGHVLTDISVDDSIPPTNTEEEIIHLCITIEDTGIGIPQSLFDSIFEPFSQADNSTTRKYGGTGLGLSITKRLIEEVMGGTIQVSSIVGQGSKFKCIIPFLLPNTSPSDLNLISPSSLPKPFINRSPKSTYSFTDKKNSVPSTPIPSGDILINKVCLLICRDTVTELVFKEQLEWLGMIVKQVPRNVIDSIKNTILNNNNNNNNNNNNNNNNSNNSSSIISPSSLDYSDENEHLDLVLIDLEILTEHLKIPSNVPIIFITPTKFNISKHNGILNKWITKSPNQRVELIRRPAITDKLIPIISKCIKSQVQFTSGSSQLQSQQANLQQQLLHQQLCNNGQTLNNNYNSGGIGGGGGGGGSNTMNGSSGNLSNNNNFGQTPLSSGLVLLVHTGRTPPLFNNNGNSIIPPLELAVDHHGNQQQQLYQQQQQQQNNSSGNFQQFYQQQNNNSNNSFTPTLPNENSNNSIMNNSLNNNNTTPSNVTPTLFTSSPLDLQGRDTPVLQPPAYRKKALIVEDNELNRKVLAQLFKKIDWTISFAENGREALKEITGERCFDIVFMDCQMPVLDGFQTTKIIRSKERENNWKRMNIVALSAGSSSSFVQDCLDSGMDSFMGKPITLATLKDALAKWGGYNN.

A compositionally biased stretch (basic and acidic residues) spans 1-10 (MELKTFKDLN). 8 disordered regions span residues 1–41 (MELK…QQQQ), 68–149 (HIPQ…YYYS), 184–267 (NSSS…HQRR), 286–323 (KNKPLSSSTPSTVNTCGAVNNNSNNNNNNNNNSTGSLG), 339–359 (TEESTGGNNSPRSNCGSNCGS), 415–505 (NNNN…NSPR), 520–546 (SLTSSNNNNQSNNNTNPSINNNNGRNG), and 560–733 (KPVV…NGAT). Polar residues predominate over residues 19 to 32 (PVINTGDQPNPLRT). Low complexity predominate over residues 68–81 (HIPQQLYQKQQQQQ). Over residues 82–104 (HSHSYGNHSFIHNVSPTSPSYDI) the composition is skewed to polar residues. 2 stretches are compositionally biased toward low complexity: residues 105–145 (NNNN…YNNN) and 184–244 (NSSS…NNNI). The span at 289 to 304 (PLSSSTPSTVNTCGAV) shows a compositional bias: polar residues. 3 stretches are compositionally biased toward low complexity: residues 305 to 318 (NNNSNNNNNNNNNS), 344 to 359 (GGNNSPRSNCGSNCGS), and 415 to 447 (NNNNNNINPNNNPNNSNNSNNNVSPRNNNHNIS). Residues 448–468 (PRGSNISPRSNNGGSTTISPR) are compositionally biased toward polar residues. Low complexity-rich tracts occupy residues 469-485 (NISNNNNIINNINNNNI), 520-545 (SLTSSNNNNQSNNNTNPSINNNNGRN), and 565-600 (NNGNNNNNNNTNNSTTSNNNITTNNNNNNNNNINNN). Residues 614–628 (SKTNSLQDFETSSMN) show a composition bias toward polar residues. Positions 657 to 727 (NSNNTNSNNS…NNNNNNNNNN (71 aa)) are enriched in low complexity. The helical transmembrane segment at 772-792 (AIILGLFIVGSSISILATLVL) threads the bilayer. In terms of domain architecture, CHASE spans 838-1082 (STSEDQFVPF…NVGGRNWMIA (245 aa)). The chain crosses the membrane as a helical span at residues 1098-1118 (PYAIGGVCMLLSALVSFWFAV). The stretch at 1139–1164 (NRKLAEKALAESQERLELAMEGSEDA) forms a coiled coil. 2 disordered regions span residues 1209 to 1228 (LNFKGDSKNGGSNNGTFNLF) and 1233 to 1252 (VDSSSPQSITNVNTTNGGGG). In terms of domain architecture, PAS spans 1235-1317 (SSSPQSITNV…SEIKKTITRE (83 aa)). In terms of domain architecture, PAC spans 1321–1376 (MEIECRMRKKYGGYLYIIMRGKVVSNETSFKDNSLRMAGTLRDMTSRKDMQRLILE). The Histidine kinase domain occupies 1393–1620 (TVSHEVRTPL…KFKCIIPFLL (228 aa)). H1396 is subject to Phosphohistidine; by autocatalysis. 3 disordered regions span residues 1874–1893 (GGGSNTMNGSSGNLSNNNNF), 1933–1952 (HGNQQQQLYQQQQQQQNNSS), and 1962–2017 (QNNN…DTPV). Composition is skewed to low complexity over residues 1878-1893 (NTMNGSSGNLSNNNNF), 1935-1952 (NQQQQLYQQQQQQQNNSS), and 1962-2002 (QNNN…TPTL). Residues 2026–2146 (KALIVEDNEL…TLKDALAKWG (121 aa)) enclose the Response regulatory domain. Position 2076 is a 4-aspartylphosphate (D2076).

Interacts with SDF-2, an acbA peptide involved in sporulation.

It localises to the cell membrane. The catalysed reaction is ATP + protein L-histidine = ADP + protein N-phospho-L-histidine.. Functionally, acts as a receptor histidine kinase for the cytokinin SDF-2 in a signal transduction pathway that regulates prestalk gene expression and controls terminal differentiation of prespore cells. Binding of SDF-2 to this protein inhibits phosphorelay and induces rapid sporulation. This protein undergoes an ATP-dependent autophosphorylation at a conserved histidine residue in the kinase core, and a phosphoryl group is then transferred to a conserved aspartate residue in the receiver domain. The sequence is that of Hybrid signal transduction histidine kinase A (dhkA) from Dictyostelium discoideum (Social amoeba).